A 427-amino-acid polypeptide reads, in one-letter code: Transcription factor MYB98 (427 aa).

Positions 195-202 (TRKLSSSS) match the Nuclear localization signal 1 motif. HTH myb-type domains are found at residues 212–267 (KSTL…RPDI) and 268–318 (KKET…RRQF). DNA-binding regions (H-T-H motif) lie at residues 240 to 263 (WSHI…HNHL) and 291 to 314 (WAEI…NATK). Residues 361–368 (NKKKDVVV) carry the Nuclear localization signal 2 motif.

As to expression, expressed at high levels in the synergid cells of the female gametophyte, and at lower levels in the endosperm of young seeds and the trichomes of young leaves and sepals.

It localises to the nucleus. In terms of biological role, transcription factor that binds to the motif 5'-GTAACNT-3' in the promoter of target genes (e.g. DD11 and DD18) and promotes their expression within synergid cells (e.g. in the filiform apparatus) in ovules. Required for the formation of the filiform apparatus during synergid cell differentiation in the female gametophyte. Involved in pollen tube guidance to the micropyle. The protein is Transcription factor MYB98 of Arabidopsis thaliana (Mouse-ear cress).